The primary structure comprises 104 residues: Flagellar hook-basal body complex protein FliE (104 aa).

The protein belongs to the FliE family.

The protein resides in the bacterial flagellum basal body. The sequence is that of Flagellar hook-basal body complex protein FliE from Edwardsiella ictaluri (strain 93-146).